Here is a 241-residue protein sequence, read N- to C-terminus: Nuclear receptor-interacting protein 3 (241 aa).

The protein is Nuclear receptor-interacting protein 3 (NRIP3) of Homo sapiens (Human).